The following is a 565-amino-acid chain: Proline--tRNA ligase (565 aa).

The protein belongs to the class-II aminoacyl-tRNA synthetase family. ProS type 1 subfamily. Homodimer.

The protein localises to the cytoplasm. The enzyme catalyses tRNA(Pro) + L-proline + ATP = L-prolyl-tRNA(Pro) + AMP + diphosphate. Catalyzes the attachment of proline to tRNA(Pro) in a two-step reaction: proline is first activated by ATP to form Pro-AMP and then transferred to the acceptor end of tRNA(Pro). As ProRS can inadvertently accommodate and process non-cognate amino acids such as alanine and cysteine, to avoid such errors it has two additional distinct editing activities against alanine. One activity is designated as 'pretransfer' editing and involves the tRNA(Pro)-independent hydrolysis of activated Ala-AMP. The other activity is designated 'posttransfer' editing and involves deacylation of mischarged Ala-tRNA(Pro). The misacylated Cys-tRNA(Pro) is not edited by ProRS. The polypeptide is Proline--tRNA ligase (Lactobacillus johnsonii (strain CNCM I-12250 / La1 / NCC 533)).